The chain runs to 304 residues: Ornithine carbamoyltransferase (304 aa).

Carbamoyl phosphate-binding positions include 47-50 (STRT), Arg98, and 125-128 (HPCQ). Residues Asn156, Asp221, and 225–226 (SM) each bind L-ornithine. Residues 262 to 263 (CL) and Arg290 each bind carbamoyl phosphate.

The protein belongs to the aspartate/ornithine carbamoyltransferase superfamily. OTCase family.

The protein resides in the cytoplasm. It catalyses the reaction carbamoyl phosphate + L-ornithine = L-citrulline + phosphate + H(+). Its pathway is amino-acid biosynthesis; L-arginine biosynthesis; L-arginine from L-ornithine and carbamoyl phosphate: step 1/3. Its function is as follows. Reversibly catalyzes the transfer of the carbamoyl group from carbamoyl phosphate (CP) to the N(epsilon) atom of ornithine (ORN) to produce L-citrulline. The protein is Ornithine carbamoyltransferase of Methanococcus aeolicus (strain ATCC BAA-1280 / DSM 17508 / OCM 812 / Nankai-3).